The chain runs to 214 residues: Probable GTP-binding protein EngB (214 aa).

An EngB-type G domain is found at 25-203; it reads EGAEVAFAGR…EQVITGWLNL (179 aa). GTP is bound by residues 33-40, 60-64, 80-83, 147-150, and 182-184; these read GRSNAGKS, GRTQL, DLPG, TKSD, and FSS. 2 residues coordinate Mg(2+): S40 and T62.

The protein belongs to the TRAFAC class TrmE-Era-EngA-EngB-Septin-like GTPase superfamily. EngB GTPase family. Requires Mg(2+) as cofactor.

In terms of biological role, necessary for normal cell division and for the maintenance of normal septation. This chain is Probable GTP-binding protein EngB, found in Teredinibacter turnerae (strain ATCC 39867 / T7901).